The following is a 174-amino-acid chain: Serine protease 2 (174 aa).

Cys-15 and Cys-36 are joined by a disulfide. Active-site charge relay system residues include His-35, Asp-65, and Ser-147. A disulfide bridge links Cys-141 with Cys-168.

Belongs to the peptidase S1 family.

The protein resides in the secreted. Functionally, broad substrate specificity. This chain is Serine protease 2, found in Streptomyces fradiae (Streptomyces roseoflavus).